The sequence spans 448 residues: Methylenetetrahydrofolate--tRNA-(uracil-5-)-methyltransferase TrmFO (448 aa).

13–18 (GAGLAG) is an FAD binding site.

This sequence belongs to the MnmG family. TrmFO subfamily. The cofactor is FAD.

It is found in the cytoplasm. The enzyme catalyses uridine(54) in tRNA + (6R)-5,10-methylene-5,6,7,8-tetrahydrofolate + NADH + H(+) = 5-methyluridine(54) in tRNA + (6S)-5,6,7,8-tetrahydrofolate + NAD(+). It catalyses the reaction uridine(54) in tRNA + (6R)-5,10-methylene-5,6,7,8-tetrahydrofolate + NADPH + H(+) = 5-methyluridine(54) in tRNA + (6S)-5,6,7,8-tetrahydrofolate + NADP(+). Its function is as follows. Catalyzes the folate-dependent formation of 5-methyl-uridine at position 54 (M-5-U54) in all tRNAs. The sequence is that of Methylenetetrahydrofolate--tRNA-(uracil-5-)-methyltransferase TrmFO from Streptococcus pyogenes serotype M6 (strain ATCC BAA-946 / MGAS10394).